Consider the following 498-residue polypeptide: Glycerol kinase (498 aa).

Threonine 12 serves as a coordination point for ADP. Residues threonine 12, threonine 13, and serine 14 each contribute to the ATP site. Position 12 (threonine 12) interacts with sn-glycerol 3-phosphate. ADP is bound at residue arginine 16. Sn-glycerol 3-phosphate contacts are provided by arginine 82, glutamate 83, tyrosine 134, and aspartate 244. 5 residues coordinate glycerol: arginine 82, glutamate 83, tyrosine 134, aspartate 244, and glutamine 245. The ADP site is built by threonine 266 and glycine 310. ATP contacts are provided by threonine 266, glycine 310, glutamine 314, and glycine 411. Residues glycine 411 and asparagine 415 each coordinate ADP.

This sequence belongs to the FGGY kinase family.

It catalyses the reaction glycerol + ATP = sn-glycerol 3-phosphate + ADP + H(+). It functions in the pathway polyol metabolism; glycerol degradation via glycerol kinase pathway; sn-glycerol 3-phosphate from glycerol: step 1/1. Inhibited by fructose 1,6-bisphosphate (FBP). Key enzyme in the regulation of glycerol uptake and metabolism. Catalyzes the phosphorylation of glycerol to yield sn-glycerol 3-phosphate. The polypeptide is Glycerol kinase (Chloroflexus aurantiacus (strain ATCC 29364 / DSM 637 / Y-400-fl)).